A 541-amino-acid chain; its full sequence is Protein wntless homolog (541 aa).

At 1–15 (MAGAIIENMSTKKLC) the chain is on the cytoplasmic side. The helical transmembrane segment at 16–36 (IVGGILLVFQIIAFLVGGLIA) threads the bilayer. Residues 37-232 (PGPTTAVSYM…GIHQNGGFTK (196 aa)) lie on the Lumenal side of the membrane. The interval 101-232 (MEMSPWFQFM…GIHQNGGFTK (132 aa)) is interaction with Wnt proteins. The helical transmembrane segment at 233–253 (VWFAMKTFLTPSIFIIMVWYW) threads the bilayer. Residues 254 to 268 (RRITMMSRPPVLLEK) lie on the Cytoplasmic side of the membrane. A helical membrane pass occupies residues 269-289 (VIFALGISMTFINIPVEWFSI). The Lumenal portion of the chain corresponds to 290 to 303 (GFDWTWMLLFGDIR). A helical transmembrane segment spans residues 304–324 (QGIFYAMLLSFWIIFCGEHMM). Topologically, residues 325 to 331 (DQHERNH) are cytoplasmic. Residues 332-352 (IAGYWKQVGPIAVGSFCLFIF) form a helical membrane-spanning segment. Topologically, residues 353-380 (DMCERGVQLTNPFYSIWTTDIGTELAMA) are lumenal. The chain crosses the membrane as a helical span at residues 381 to 401 (FIIVAGICLCLYFLFLCFMVF). Residues 402–431 (QVFRNISGKQSSLPAMSKVRRLHYEGLIFR) are Cytoplasmic-facing. A helical transmembrane segment spans residues 432–452 (FKFLMLITLACAAMTVIFFIV). Residues 453–471 (SQVTEGHWKWGGVTVQVNS) are Lumenal-facing. The chain crosses the membrane as a helical span at residues 472–492 (AFFTGIYGMWNLYVFALMFLY). Residues 493–541 (APSHKNYGEDQSNGDLGVHSGEELQLTTTITHVDGPTEIYKLTRKEAQE) are Cytoplasmic-facing.

Belongs to the wntless family. Interacts with WNT3A. Interacts with WNT1, WNT3 and WNT5A. N-glycosylated.

The protein resides in the golgi apparatus membrane. It localises to the cytoplasmic vesicle membrane. Its subcellular location is the cell membrane. It is found in the endoplasmic reticulum membrane. The protein localises to the early endosome membrane. Regulates Wnt proteins sorting and secretion in a feedback regulatory mechanism. This reciprocal interaction plays a key role in the regulation of expression, subcellular location, binding and organelle-specific association of Wnt proteins. Plays also an important role in establishment of the anterior-posterior body axis formation during development. The polypeptide is Protein wntless homolog (WLS) (Homo sapiens (Human)).